Here is a 390-residue protein sequence, read N- to C-terminus: Phosphopentomutase (390 aa).

Mn(2+) is bound by residues D11, D283, H288, D324, H325, and H336.

Belongs to the phosphopentomutase family. Mn(2+) is required as a cofactor.

The protein resides in the cytoplasm. It carries out the reaction 2-deoxy-alpha-D-ribose 1-phosphate = 2-deoxy-D-ribose 5-phosphate. It catalyses the reaction alpha-D-ribose 1-phosphate = D-ribose 5-phosphate. It functions in the pathway carbohydrate degradation; 2-deoxy-D-ribose 1-phosphate degradation; D-glyceraldehyde 3-phosphate and acetaldehyde from 2-deoxy-alpha-D-ribose 1-phosphate: step 1/2. Its function is as follows. Isomerase that catalyzes the conversion of deoxy-ribose 1-phosphate (dRib-1-P) and ribose 1-phosphate (Rib-1-P) to deoxy-ribose 5-phosphate (dRib-5-P) and ribose 5-phosphate (Rib-5-P), respectively. The sequence is that of Phosphopentomutase from Alkaliphilus metalliredigens (strain QYMF).